We begin with the raw amino-acid sequence, 102 residues long: Co-chaperonin GroES (102 aa).

The protein belongs to the GroES chaperonin family. In terms of assembly, heptamer of 7 subunits arranged in a ring. Interacts with the chaperonin GroEL.

The protein resides in the cytoplasm. In terms of biological role, together with the chaperonin GroEL, plays an essential role in assisting protein folding. The GroEL-GroES system forms a nano-cage that allows encapsulation of the non-native substrate proteins and provides a physical environment optimized to promote and accelerate protein folding. GroES binds to the apical surface of the GroEL ring, thereby capping the opening of the GroEL channel. The chain is Co-chaperonin GroES from Chlamydia muridarum (strain MoPn / Nigg).